The sequence spans 548 residues: Chaperonin GroEL (548 aa).

Residues T30–P33, K51, D87–T91, G415, N479–A481, and D495 contribute to the ATP site.

This sequence belongs to the chaperonin (HSP60) family. Forms a cylinder of 14 subunits composed of two heptameric rings stacked back-to-back. Interacts with the co-chaperonin GroES.

It is found in the cytoplasm. The enzyme catalyses ATP + H2O + a folded polypeptide = ADP + phosphate + an unfolded polypeptide.. Functionally, together with its co-chaperonin GroES, plays an essential role in assisting protein folding. The GroEL-GroES system forms a nano-cage that allows encapsulation of the non-native substrate proteins and provides a physical environment optimized to promote and accelerate protein folding. The protein is Chaperonin GroEL of Methylibium petroleiphilum (strain ATCC BAA-1232 / LMG 22953 / PM1).